A 70-amino-acid polypeptide reads, in one-letter code: NADH dehydrogenase [ubiquinone] 1 alpha subcomplex subunit 1 (70 aa).

The chain crosses the membrane as a helical span at residues 1 to 21 (MWFEILPGLSVMGVCLLIPGL).

Belongs to the complex I NDUFA1 subunit family. Complex I is composed of 45 different subunits. Primarily expressed in heart and skeletal muscle.

The protein localises to the mitochondrion inner membrane. In terms of biological role, accessory subunit of the mitochondrial membrane respiratory chain NADH dehydrogenase (Complex I), that is believed not to be involved in catalysis. Complex I functions in the transfer of electrons from NADH to the respiratory chain. The immediate electron acceptor for the enzyme is believed to be ubiquinone. This Homo sapiens (Human) protein is NADH dehydrogenase [ubiquinone] 1 alpha subcomplex subunit 1 (NDUFA1).